The sequence spans 249 residues: Probable phosphatase Shal_1519 (249 aa).

The Zn(2+) site is built by His-8, His-10, His-16, His-41, Glu-74, His-102, His-132, Asp-193, and His-195.

Belongs to the PHP family. Zn(2+) serves as cofactor.

This Shewanella halifaxensis (strain HAW-EB4) protein is Probable phosphatase Shal_1519.